A 309-amino-acid chain; its full sequence is Branched-chain-amino-acid aminotransferase (309 aa).

An N6-(pyridoxal phosphate)lysine modification is found at Lys160.

It belongs to the class-IV pyridoxal-phosphate-dependent aminotransferase family. As to quaternary structure, homohexamer. Pyridoxal 5'-phosphate serves as cofactor.

It catalyses the reaction L-leucine + 2-oxoglutarate = 4-methyl-2-oxopentanoate + L-glutamate. The enzyme catalyses L-isoleucine + 2-oxoglutarate = (S)-3-methyl-2-oxopentanoate + L-glutamate. It carries out the reaction L-valine + 2-oxoglutarate = 3-methyl-2-oxobutanoate + L-glutamate. Its pathway is amino-acid biosynthesis; L-isoleucine biosynthesis; L-isoleucine from 2-oxobutanoate: step 4/4. The protein operates within amino-acid biosynthesis; L-leucine biosynthesis; L-leucine from 3-methyl-2-oxobutanoate: step 4/4. It participates in amino-acid biosynthesis; L-valine biosynthesis; L-valine from pyruvate: step 4/4. In terms of biological role, acts on leucine, isoleucine and valine. The sequence is that of Branched-chain-amino-acid aminotransferase (ilvE) from Escherichia coli O157:H7.